The following is a 50-amino-acid chain: Large ribosomal subunit protein bL33 (50 aa).

It belongs to the bacterial ribosomal protein bL33 family.

The chain is Large ribosomal subunit protein bL33 from Fusobacterium nucleatum subsp. nucleatum (strain ATCC 25586 / DSM 15643 / BCRC 10681 / CIP 101130 / JCM 8532 / KCTC 2640 / LMG 13131 / VPI 4355).